We begin with the raw amino-acid sequence, 90 residues long: uncharacterized protein (90 aa).

Residues 1–20 form the signal peptide; that stretch reads MEKLFVLVFALALLAFSSDA.

It is found in the secreted. This is an uncharacterized protein from Mus musculus (Mouse).